A 183-amino-acid chain; its full sequence is MEVKFITGKHGGRRPQRAEPQRICRALWLTPWPSLILKLLSWIILSNLFLHLRATHHMTELPLRFLYIALSEMTFREQTSHQIIQQMSLSNKLEQNQLYGEVINKETDNPVISSGLTLLFAQKPQSPGWKNMSSTKRVCTILADSCRAQAHAADRGERGHFGVQILHHFIEVFNVMAVRSNPF.

This is an uncharacterized protein from Homo sapiens (Human).